Reading from the N-terminus, the 168-residue chain is Disulfide bond formation protein B 1 (168 aa).

The Cytoplasmic segment spans residues 1–14 (MNEQTSRLNRERRF). The chain crosses the membrane as a helical span at residues 15 to 31 (LVLLGLICLSLIGGALY). At 32–49 (MQVVLGEAPCPLCILQRY) the chain is on the periplasmic side. A disulfide bridge links Cys-41 with Cys-44. The helical transmembrane segment at 50-65 (ALLFIAVFAFIAAAMP) threads the bilayer. At 66 to 72 (GRRSLTF) the chain is on the cytoplasmic side. A helical membrane pass occupies residues 73 to 89 (FEALVVLSAIGGIVAAG). Residues 90 to 144 (NHVYILANPMVSCGIDTLQPIVDDLPLAKLWPLAFQVDGFCSTPYPPILGLSLAQ) are Periplasmic-facing. An intrachain disulfide couples Cys-102 to Cys-130. A helical membrane pass occupies residues 145 to 163 (WALVAFVLTAVLVPLGIYR). The Cytoplasmic portion of the chain corresponds to 164–168 (NRRQA).

It belongs to the DsbB family.

It is found in the cell inner membrane. Its function is as follows. Required for disulfide bond formation in some periplasmic proteins. Acts by oxidizing the DsbA protein. The polypeptide is Disulfide bond formation protein B 1 (dsbB1) (Pseudomonas putida (strain ATCC 47054 / DSM 6125 / CFBP 8728 / NCIMB 11950 / KT2440)).